The primary structure comprises 304 residues: Spore coat protein CotB (304 aa).

It is found in the spore coat. Its subcellular location is the spore. It localises to the perispore. In terms of biological role, contributes to the formation of thick-exosporium spores. The protein is Spore coat protein CotB of Clostridioides difficile (strain 630) (Peptoclostridium difficile).